A 427-amino-acid chain; its full sequence is Imidazolonepropionase (427 aa).

Fe(3+)-binding residues include His78 and His80. 2 residues coordinate Zn(2+): His78 and His80. 3 residues coordinate 4-imidazolone-5-propanoate: Arg87, Tyr150, and His183. An N-formimidoyl-L-glutamate-binding site is contributed by Tyr150. His255 is a Fe(3+) binding site. Residue His255 participates in Zn(2+) binding. Glu258 contacts 4-imidazolone-5-propanoate. A Fe(3+)-binding site is contributed by Asp330. Residue Asp330 participates in Zn(2+) binding. 2 residues coordinate N-formimidoyl-L-glutamate: Asn332 and Gly334. Thr335 provides a ligand contact to 4-imidazolone-5-propanoate.

Belongs to the metallo-dependent hydrolases superfamily. HutI family. The cofactor is Zn(2+). It depends on Fe(3+) as a cofactor.

It localises to the cytoplasm. The enzyme catalyses 4-imidazolone-5-propanoate + H2O = N-formimidoyl-L-glutamate. The protein operates within amino-acid degradation; L-histidine degradation into L-glutamate; N-formimidoyl-L-glutamate from L-histidine: step 3/3. Its function is as follows. Catalyzes the hydrolytic cleavage of the carbon-nitrogen bond in imidazolone-5-propanoate to yield N-formimidoyl-L-glutamate. It is the third step in the universal histidine degradation pathway. In Herpetosiphon aurantiacus (strain ATCC 23779 / DSM 785 / 114-95), this protein is Imidazolonepropionase.